A 197-amino-acid polypeptide reads, in one-letter code: MPLHDRIVGHFQASAQSKLDAADALAPRIEQGARLLVHSLAQGGKILACGNGGSAADAQHFASEMLNRFEQERPGLAALALTTDTSTLTSIANDYAYDQVFARQVKALGQPGDVLLAISTSGNSANVLQAVAAAHARSMQVIALTGRSGGGLAEQIDDGDVCICVPAESTARIQEIHLLTIHCLCDAVDSLLLGVEE.

Residues 36-197 (LVHSLAQGGK…VDSLLLGVEE (162 aa)) enclose the SIS domain. Residue 51-53 (NGG) participates in substrate binding. Zn(2+) is bound by residues His-60 and Glu-64. Substrate contacts are provided by residues Glu-64, 93 to 94 (ND), 119 to 121 (STS), Ser-124, and Gln-174. The Zn(2+) site is built by Gln-174 and His-182.

It belongs to the SIS family. GmhA subfamily. Homotetramer. The cofactor is Zn(2+).

The protein localises to the cytoplasm. The enzyme catalyses 2 D-sedoheptulose 7-phosphate = D-glycero-alpha-D-manno-heptose 7-phosphate + D-glycero-beta-D-manno-heptose 7-phosphate. It functions in the pathway carbohydrate biosynthesis; D-glycero-D-manno-heptose 7-phosphate biosynthesis; D-glycero-alpha-D-manno-heptose 7-phosphate and D-glycero-beta-D-manno-heptose 7-phosphate from sedoheptulose 7-phosphate: step 1/1. Its function is as follows. Catalyzes the isomerization of sedoheptulose 7-phosphate in D-glycero-D-manno-heptose 7-phosphate. The polypeptide is Phosphoheptose isomerase (Thiobacillus denitrificans (strain ATCC 25259 / T1)).